The primary structure comprises 482 residues: Methylenetetrahydrofolate--tRNA-(uracil-5-)-methyltransferase TrmFO (482 aa).

11 to 16 (GGGLAG) contributes to the FAD binding site. The disordered stretch occupies residues 450–482 (LRQPSPWSAEDSPRAALPIPEPTPLGPASGSSE).

It belongs to the MnmG family. TrmFO subfamily. It depends on FAD as a cofactor.

Its subcellular location is the cytoplasm. It catalyses the reaction uridine(54) in tRNA + (6R)-5,10-methylene-5,6,7,8-tetrahydrofolate + NADH + H(+) = 5-methyluridine(54) in tRNA + (6S)-5,6,7,8-tetrahydrofolate + NAD(+). It carries out the reaction uridine(54) in tRNA + (6R)-5,10-methylene-5,6,7,8-tetrahydrofolate + NADPH + H(+) = 5-methyluridine(54) in tRNA + (6S)-5,6,7,8-tetrahydrofolate + NADP(+). Catalyzes the folate-dependent formation of 5-methyl-uridine at position 54 (M-5-U54) in all tRNAs. The chain is Methylenetetrahydrofolate--tRNA-(uracil-5-)-methyltransferase TrmFO from Rhodospirillum rubrum (strain ATCC 11170 / ATH 1.1.1 / DSM 467 / LMG 4362 / NCIMB 8255 / S1).